Reading from the N-terminus, the 500-residue chain is Lysine--tRNA ligase (500 aa).

Glu-410 and Glu-417 together coordinate Mg(2+).

Belongs to the class-II aminoacyl-tRNA synthetase family. Homodimer. Mg(2+) is required as a cofactor.

Its subcellular location is the cytoplasm. It catalyses the reaction tRNA(Lys) + L-lysine + ATP = L-lysyl-tRNA(Lys) + AMP + diphosphate. The chain is Lysine--tRNA ligase from Pseudomonas fluorescens (strain ATCC BAA-477 / NRRL B-23932 / Pf-5).